The sequence spans 212 residues: Ribosomal RNA small subunit methyltransferase G (212 aa).

Residues Gly80, Leu85, 131–132 (AE), and Arg146 contribute to the S-adenosyl-L-methionine site.

The protein belongs to the methyltransferase superfamily. RNA methyltransferase RsmG family.

It localises to the cytoplasm. The enzyme catalyses guanosine(527) in 16S rRNA + S-adenosyl-L-methionine = N(7)-methylguanosine(527) in 16S rRNA + S-adenosyl-L-homocysteine. Functionally, specifically methylates the N7 position of guanine in position 527 of 16S rRNA. The protein is Ribosomal RNA small subunit methyltransferase G of Xanthomonas euvesicatoria pv. vesicatoria (strain 85-10) (Xanthomonas campestris pv. vesicatoria).